The sequence spans 293 residues: Elongation factor Ts (293 aa).

Residues 79 to 82 (TDFV) are involved in Mg(2+) ion dislocation from EF-Tu.

Belongs to the EF-Ts family.

Its subcellular location is the cytoplasm. Associates with the EF-Tu.GDP complex and induces the exchange of GDP to GTP. It remains bound to the aminoacyl-tRNA.EF-Tu.GTP complex up to the GTP hydrolysis stage on the ribosome. In Halalkalibacterium halodurans (strain ATCC BAA-125 / DSM 18197 / FERM 7344 / JCM 9153 / C-125) (Bacillus halodurans), this protein is Elongation factor Ts (tsf).